Here is a 149-residue protein sequence, read N- to C-terminus: 3-hydroxyacyl-[acyl-carrier-protein] dehydratase FabZ (149 aa).

His49 is a catalytic residue.

It belongs to the thioester dehydratase family. FabZ subfamily.

It is found in the cytoplasm. It carries out the reaction a (3R)-hydroxyacyl-[ACP] = a (2E)-enoyl-[ACP] + H2O. Functionally, involved in unsaturated fatty acids biosynthesis. Catalyzes the dehydration of short chain beta-hydroxyacyl-ACPs and long chain saturated and unsaturated beta-hydroxyacyl-ACPs. The polypeptide is 3-hydroxyacyl-[acyl-carrier-protein] dehydratase FabZ (Sulfurovum sp. (strain NBC37-1)).